Consider the following 79-residue polypeptide: uncharacterized protein (79 aa).

This sequence belongs to the asfivirus D79L family.

This is an uncharacterized protein from Ornithodoros (relapsing fever ticks).